Reading from the N-terminus, the 431-residue chain is Trigger factor (431 aa).

Residues 160 to 245 (DDRVTIDFVG…VKKVEVMVLP (86 aa)) enclose the PPIase FKBP-type domain.

It belongs to the FKBP-type PPIase family. Tig subfamily.

The protein resides in the cytoplasm. The enzyme catalyses [protein]-peptidylproline (omega=180) = [protein]-peptidylproline (omega=0). Its function is as follows. Involved in protein export. Acts as a chaperone by maintaining the newly synthesized protein in an open conformation. Functions as a peptidyl-prolyl cis-trans isomerase. The sequence is that of Trigger factor from Mannheimia succiniciproducens (strain KCTC 0769BP / MBEL55E).